A 276-amino-acid chain; its full sequence is MKILRGEEIAEKKAENLHGIIERSGLEPSLKLIQIGDNEAASIYARAKIRRGKKIGIAVDLEKYDDISMKDLLKRIDDLAKDPQINGIMIENPLPKGFDYYEIVRNIPYYKDVDALSPYNQGLIALNREFLVPATPRAVIDIMDYYGYHENTVTIVNRSPVVGRPLSMMLLNRNYTVSVCHSKTKDIGSMTRSSKIVVVAVGRPGFLNREMVTPGSVVIDVGINYVNDKVVGDANFEDLSEYVEAITPVPGGVGPITATNILENVVKAAEFQKNNL.

Residues Asn-157–Ser-159, Ser-182, and Ile-223 each bind NADP(+).

This sequence belongs to the tetrahydrofolate dehydrogenase/cyclohydrolase family. In terms of assembly, homodimer.

It catalyses the reaction (6R)-5,10-methylene-5,6,7,8-tetrahydrofolate + NADP(+) = (6R)-5,10-methenyltetrahydrofolate + NADPH. The enzyme catalyses (6R)-5,10-methenyltetrahydrofolate + H2O = (6R)-10-formyltetrahydrofolate + H(+). It functions in the pathway one-carbon metabolism; tetrahydrofolate interconversion. In terms of biological role, catalyzes the oxidation of 5,10-methylenetetrahydrofolate to 5,10-methenyltetrahydrofolate and then the hydrolysis of 5,10-methenyltetrahydrofolate to 10-formyltetrahydrofolate. The chain is Bifunctional protein FolD from Thermoplasma acidophilum (strain ATCC 25905 / DSM 1728 / JCM 9062 / NBRC 15155 / AMRC-C165).